Here is a 2439-residue protein sequence, read N- to C-terminus: Mucin-6 (2439 aa).

The signal sequence occupies residues 1–22; sequence MVQRWLLLSCCGALLSAGLANT. Residues 43–214 enclose the VWFD 1 domain; sequence GQCSTWGAGH…KLDDPGEICT (172 aa). 2 disulfides stabilise this stretch: cysteine 45/cysteine 176 and cysteine 67/cysteine 213. Asparagine 268 is a glycosylation site (N-linked (GlcNAc...) asparagine). The TIL domain maps to 302 to 357; that stretch reads CPANQVYQECGSACVKTCSNPQHSCSSSCTFGCFCPEGTVLNDLSNNHTCVPVTQC. One can recognise a VWFD 2 domain in the interval 395–579; that stretch reads GHCSLEGGSF…ALERETDPCS (185 aa). 2 disulfides stabilise this stretch: cysteine 397–cysteine 533 and cysteine 419–cysteine 578. N-linked (GlcNAc...) asparagine glycans are attached at residues asparagine 486 and asparagine 659. The region spanning 866 to 1038 is the VWFD 3 domain; that stretch reads STCTLYGEGH…NSWKESPLCG (173 aa). Disulfide bonds link cysteine 868–cysteine 1002, cysteine 890–cysteine 1037, cysteine 899–cysteine 999, and cysteine 917–cysteine 924. N-linked (GlcNAc...) asparagine glycosylation is found at asparagine 975 and asparagine 1179. 8 disordered regions span residues 1202-1455, 1471-1626, 1642-1834, 1868-1983, 2033-2077, 2090-2196, 2233-2278, and 2323-2348; these read PQPP…TSLV, ATSA…LVTP, SASI…HPHT, SIHS…STGP, ATSA…THSS, SSSW…SASP, VSPT…SLTT, and LTAH…SPGV. The span at 1224 to 1265 shows a compositional bias: low complexity; it reads TGTSTTIGLLSSTGPSPSSNHTPASPTQTPLLPATLTSSKPT. The span at 1276–1286 shows a compositional bias: polar residues; that stretch reads TAVTPQATSGL. Positions 1294-1339 are enriched in low complexity; it reads STATKPTVTQATTRATASTASPATTSTAQSTTRTTMTLPTPATSGT. Positions 1340 to 1351 are enriched in polar residues; sequence SPTLPKSTNQEL. 2 stretches are compositionally biased toward low complexity: residues 1352 to 1373 and 1381 to 1415; these read PGTT…TGPT and TRPT…AGSP. Composition is skewed to polar residues over residues 1416–1455, 1471–1481, and 1490–1520; these read VPST…TSLV, ATSASNHSAPT, and LKAT…STNK. Low complexity-rich tracts occupy residues 1521-1567 and 1574-1611; these read TPTS…ATSS and TTHS…PQTT. One copy of the 1; truncated repeat lies at 1561–1738; that stretch reads TNSATSSRPP…TTSGTSQSRS (178 aa). An approximate repeats region spans residues 1607–1953; that stretch reads HPQTTLPTHV…STGTRTPVAH (347 aa). Residues 1659–1686 show a composition bias toward polar residues; it reads LKATGSTHTAPTMTLTTSGTSQALSSLN. Low complexity predominate over residues 1687–1768; sequence TAKTSTSLHS…PEVTSTSTTS (82 aa). Residues 1769 to 1793 are compositionally biased toward polar residues; that stretch reads ITPNHTSTGTRTPVAHTTSATSSRL. Copy 2 of the repeat occupies 1785 to 1953; the sequence is TTSATSSRLP…STGTRTPVAH (169 aa). 2 stretches are compositionally biased toward low complexity: residues 1794-1834 and 1891-1917; these read PTPF…HPHT and TAPP…TSTS. The span at 1918-1962 shows a compositional bias: polar residues; it reads LPYHTSSTHHPEVTPTSTTNITPKHTSTGTRTPVAHTTSASSSRL. Positions 1963–1983 are enriched in low complexity; it reads PTPFTTHSPPTGSSPFSSTGP. Residues 2052-2070 are compositionally biased toward polar residues; that stretch reads LKATGSTHTAPPMTVTTSG. Positions 2090-2102 are enriched in low complexity; that stretch reads SSSWLPQNSSSRP. The span at 2107–2120 shows a compositional bias: polar residues; that stretch reads ITTQLPHLSSATTP. Positions 2121-2196 are enriched in low complexity; that stretch reads VSTTNQLSSS…PTTASVSASP (76 aa). Residues 2240–2264 are compositionally biased toward polar residues; the sequence is HLASSTIAFPSTPRTTASTHTAPAF. Positions 2265 to 2278 are enriched in low complexity; sequence SSQSTTSRSTSLTT. A compositionally biased stretch (polar residues) spans 2323 to 2347; it reads LTAHGSTPASAPVSSLGTPTPTSPG. 4 cysteine pairs are disulfide-bonded: cysteine 2349–cysteine 2396, cysteine 2363–cysteine 2410, cysteine 2372–cysteine 2430, and cysteine 2376–cysteine 2432. The 90-residue stretch at 2349–2438 folds into the CTCK domain; the sequence is CSVREQQEEI…HCVCSSVACG (90 aa).

Multimer; disulfide-linked. In terms of processing, O-glycosylated. In terms of tissue distribution, expressed in the regenerative zone of gastric antrum, gastric body mucosa and gastric incisura mucosa. Expressed in the deeper mucous glands of gastric antrum. Overexpressed in Helicobacter pylori infected gastric epithelium. Highly expressed in duodenal Brunner's glands, gall bladder, seminal vesicle, pancreatic centroacinar cells and ducts, and periductal glands of the common bile duct.

Its subcellular location is the secreted. Its function is as follows. May provide a mechanism for modulation of the composition of the protective mucus layer related to acid secretion or the presence of bacteria and noxious agents in the lumen. Plays an important role in the cytoprotection of epithelial surfaces and are used as tumor markers in a variety of cancers. May play a role in epithelial organogenesis. This Homo sapiens (Human) protein is Mucin-6 (MUC6).